A 252-amino-acid polypeptide reads, in one-letter code: Ubiquinone biosynthesis O-methyltransferase (252 aa).

Residues Arg41, Gly72, Asp93, and Met136 each coordinate S-adenosyl-L-methionine.

It belongs to the methyltransferase superfamily. UbiG/COQ3 family.

It catalyses the reaction a 3-demethylubiquinol + S-adenosyl-L-methionine = a ubiquinol + S-adenosyl-L-homocysteine + H(+). It carries out the reaction a 3-(all-trans-polyprenyl)benzene-1,2-diol + S-adenosyl-L-methionine = a 2-methoxy-6-(all-trans-polyprenyl)phenol + S-adenosyl-L-homocysteine + H(+). Its pathway is cofactor biosynthesis; ubiquinone biosynthesis. Its function is as follows. O-methyltransferase that catalyzes the 2 O-methylation steps in the ubiquinone biosynthetic pathway. The chain is Ubiquinone biosynthesis O-methyltransferase from Rhizobium leguminosarum bv. trifolii (strain WSM2304).